The chain runs to 255 residues: MHRGKGMKFVGDSRIPAEKKPNIPKDYSEYPGKTEAFWPNFLLKEWMVGAVFLIGFLVLTIVHQPPLERMADPTDTGYIPLPDWYFLFLYQLLKYEYAAGSFTVVGAMIMPGLAFGALLLAPFLDRGTERRPWKRPVAVGMMLLAISAAVFLTWQSVATHDWAKAEEQGKITKEADIDTNAEGYKVFKEQGCISCHGDNLQGGAAGPSLVDSGLKPDEIKKIAVEGKGKMPAGVFKGNDKQLEELAKFISETTAK.

3 helical membrane passes run 46-62, 104-124, and 137-157; these read WMVG…LTIV, VVGA…APFL, and VAVG…WQSV. The Cytochrome c domain maps to 178–253; the sequence is DTNAEGYKVF…ELAKFISETT (76 aa). Residues Cys-192, Cys-195, and His-196 each contribute to the heme c site.

It belongs to the cytochrome b family. In terms of assembly, the main subunits of the menaquinol:cytochrome c complex are a Rieske-type iron-sulfur protein (QcrA), a cytochrome b (QcrB) and a cytochrome c (QcrC). The cofactor is heme c.

Its subcellular location is the cell membrane. Its function is as follows. Component of the menaquinol:cytochrome c reductase complex. The sequence is that of Menaquinol:cytochrome c reductase cytochrome c subunit (qcrC) from Bacillus subtilis (strain 168).